The following is a 363-amino-acid chain: Protein RecA (363 aa).

79 to 86 is a binding site for ATP; that stretch reads GPESSGKT.

It belongs to the RecA family.

Its subcellular location is the cytoplasm. Can catalyze the hydrolysis of ATP in the presence of single-stranded DNA, the ATP-dependent uptake of single-stranded DNA by duplex DNA, and the ATP-dependent hybridization of homologous single-stranded DNAs. It interacts with LexA causing its activation and leading to its autocatalytic cleavage. The sequence is that of Protein RecA from Borrelia turicatae (strain 91E135).